Here is a 259-residue protein sequence, read N- to C-terminus: Hydroxyethylthiazole kinase (259 aa).

Met-37 is a substrate binding site. ATP is bound by residues Arg-113 and Thr-158. Gly-185 serves as a coordination point for substrate.

It belongs to the Thz kinase family. It depends on Mg(2+) as a cofactor.

The catalysed reaction is 5-(2-hydroxyethyl)-4-methylthiazole + ATP = 4-methyl-5-(2-phosphooxyethyl)-thiazole + ADP + H(+). It functions in the pathway cofactor biosynthesis; thiamine diphosphate biosynthesis; 4-methyl-5-(2-phosphoethyl)-thiazole from 5-(2-hydroxyethyl)-4-methylthiazole: step 1/1. Functionally, catalyzes the phosphorylation of the hydroxyl group of 4-methyl-5-beta-hydroxyethylthiazole (THZ). This is Hydroxyethylthiazole kinase from Helicobacter pylori (strain Shi470).